A 591-amino-acid chain; its full sequence is Paxillin (591 aa).

At Met-1 the chain carries N-acetylmethionine. Asp-2 is modified (N-acetylserine). Positions Asp-3–Thr-15 match the LD motif 1 motif. The interval His-17–Leu-138 is disordered. Residue Tyr-31 is modified to Phosphotyrosine; by PTK6. Residues Val-45–Ser-54 are compositionally biased toward pro residues. Residues Trp-69–Ser-106 are compositionally biased toward polar residues. 2 positions are modified to phosphoserine: Ser-83 and Ser-85. A Phosphotyrosine modification is found at Tyr-88. Ser-106 is subject to Phosphoserine. Tyr-118 bears the Phosphotyrosine; by PTK6 mark. A phosphoserine mark is found at Ser-119, Ser-126, and Ser-130. Residues Pro-121–Ser-137 are compositionally biased toward polar residues. Residue Thr-132 is modified to Phosphothreonine. A phosphoserine mark is found at Ser-137, Ser-140, and Ser-143. Positions Glu-144–Gln-156 match the LD motif 2 motif. Residues Pro-159–Ser-260 are disordered. Tyr-181 is modified (phosphotyrosine). The LD motif 3 signature appears at Ser-216–Val-228. Ser-230 is subject to Phosphoserine. Polar residues predominate over residues Thr-236–Ser-260. The residue at position 244 (Ser-244) is a Phosphoserine; by CDK5. Phosphoserine; by SLK is present on Ser-250. Residues Ser-258, Ser-261, Ser-272, Ser-303, Ser-322, Ser-332, and Ser-340 each carry the phosphoserine modification. Residues Ala-262–Gln-315 are required for binding to PARVA and ILK. The LD motif 4 signature appears at Glu-265–Phe-276. Positions Trp-291 to Asp-335 are disordered. An LD motif 5 motif is present at residues Gln-333–Leu-345. LIM zinc-binding domains are found at residues Gly-356–Pro-415, Arg-416–Ala-473, Pro-474–Ser-533, and Leu-534–Cys-591. The residue at position 533 (Ser-533) is a Phosphoserine.

It belongs to the paxillin family. Interacts in vitro with VCL/vinculin as well as to the SH3 domain of SRC and, when tyrosine phosphorylated, to the SH2 domain of CRK. Interacts with GIT1. Interacts with NUDT16L1/SDOS. Interacts with PTK2/FAK1. Interacts with PTK2B/PYK2. Interacts with ASAP2. Interacts with unphosphorylated ITGA4. Interacts with RNF5. Interacts with PDCD10. Interacts with NEK3, the interaction is prolactin-dependent. Interacts with PTK6. Interacts with TGFB1I1. Interacts with SORBS1. Interacts with PARVB. Interacts (via LD motif 4) with PARVA/PARVIN. Interacts (via LD motif 4) with ILK. Interacts (via cytoplasmic domain) with CEACAM1; the interaction is phosphotyrosyl-dependent. Interacts with LIMA1; this complex stabilizes actin dynamics. Interacts with CD36 (via C-terminus). Interacts with TRIM15. Interacts with PAK4; PAK4 acts as a scaffold to suppport PAXI phosphorylation at Ser-272. As to quaternary structure, interacts strongly with PTK2/FAK1 and weakly with VCL/vinculin. In terms of assembly, interacts strongly with VCL/vinculin but only weakly with PTK2/FAK1. Post-translationally, phosphorylated by MAPK1/ERK2. Phosphorylated on tyrosine residues during integrin-mediated cell adhesion, embryonic development, fibroblast transformation and following stimulation of cells by mitogens. Phosphorylation at Ser-244 by CDK5 reduces its interaction with PTK2/FAK1 in matrix-cell focal adhesions (MCFA) during oligodendrocytes (OLs) differentiation. Phosphorylation at Tyr-31 and Tyr-118 by PTK6 promote the activation of RAC1 via CRK/CrKII, thereby promoting migration and invasion. Phosphorylation at Ser-250 by SLK is required for PXN redistribution and cell motility. Phosphorylation at Ser-272 promotes focal adhesion disassembly during cell migration.

It is found in the cytoplasm. It localises to the cytoskeleton. Its subcellular location is the cell junction. The protein localises to the focal adhesion. The protein resides in the cell cortex. Cytoskeletal protein involved in actin-membrane attachment at sites of cell adhesion to the extracellular matrix (focal adhesion). Recruits other proteins such as TRIM15 to focal adhesion. The chain is Paxillin from Homo sapiens (Human).